The primary structure comprises 430 residues: Signal recognition particle protein (430 aa).

Residues 105 to 112 (GLQGSGKT), 187 to 191 (DTAGR), and 245 to 248 (TKLD) contribute to the GTP site.

It belongs to the GTP-binding SRP family. SRP54 subfamily. As to quaternary structure, part of the signal recognition particle protein translocation system, which is composed of SRP and FtsY.

The protein localises to the cytoplasm. The enzyme catalyses GTP + H2O = GDP + phosphate + H(+). In terms of biological role, involved in targeting and insertion of nascent membrane proteins into the cytoplasmic membrane. Binds to the hydrophobic signal sequence of the ribosome-nascent chain (RNC) as it emerges from the ribosomes. The SRP-RNC complex is then targeted to the cytoplasmic membrane where it interacts with the SRP receptor FtsY. The sequence is that of Signal recognition particle protein from Thermus aquaticus.